Here is a 549-residue protein sequence, read N- to C-terminus: Cation/acetate symporter ActP (549 aa).

At 1–32 (MKRVLTALAATLPFAANAADAISGAVERQPTN) the chain is on the periplasmic side. A helical membrane pass occupies residues 33–55 (WQAIIMFLIFVVFTLGITYWASK). Over 56 to 75 (RVRSRNDYYTAGGNITGFQN) the chain is Cytoplasmic. Residues 76 to 98 (GLAIAGDYMSAASFLGISALVFT) traverse the membrane as a helical segment. Over 99–102 (SGYD) the chain is Periplasmic. A helical membrane pass occupies residues 103-125 (GLIYSLGFLVGWPIILFLIAERL). Over 126–145 (RNLGRYTFADVASYRLKQGP) the chain is Cytoplasmic. Residues 146–168 (IRILSACGSLVVVALYLIAQMVG) form a helical membrane-spanning segment. The Periplasmic segment spans residues 169–182 (AGKLIELLFGLNYH). Residues 183 to 205 (IAVVLVGVLMMMYVLFGGMLATT) form a helical membrane-spanning segment. Residues 206-211 (WVQIIK) are Cytoplasmic-facing. A helical transmembrane segment spans residues 212-234 (AVLLLFGASFMAFMVMKHVGFSF). Over 235–263 (NNLFSEAMAVHPKGVDIMKPGGLVKDPIS) the chain is Periplasmic. A helical transmembrane segment spans residues 264–286 (ALSLGLGLMFGTAGLPHILMHFF). Residues 287–297 (TVSDAREARKS) are Cytoplasmic-facing. The chain crosses the membrane as a helical span at residues 298-320 (VFYATGFMGYFYILTFIIGFGAI). The Periplasmic segment spans residues 321-358 (MLVGANPEYKDAAGHLIGGNNMAAVHLANAVGGNLFLG). Residues 359–381 (FISAVAFATILAVVAGLTLAGAS) traverse the membrane as a helical segment. Residues 382–401 (AVSHDLYANVFKKGATEREE) lie on the Cytoplasmic side of the membrane. Residues 402-424 (LRVSKITVLILGVIAIILGVLFE) traverse the membrane as a helical segment. The Periplasmic segment spans residues 425–427 (NQN). The helical transmembrane segment at 428–450 (IAFMVGLAFAIAASCNFPIILLS) threads the bilayer. Over 451-461 (MYWSKLTTRGA) the chain is Cytoplasmic. Residues 462 to 484 (MLGGWLGLITAVVLMILGPTIWV) form a helical membrane-spanning segment. The Periplasmic segment spans residues 485 to 493 (QILGHEKAI). A helical membrane pass occupies residues 494–516 (FPYEYPALFSISVAFLGIWLFSA). The Cytoplasmic portion of the chain corresponds to 517–549 (TDNSAEGARERELFRAQFIRSQTGFGVEQGRAH).

Belongs to the sodium:solute symporter (SSF) (TC 2.A.21) family.

The protein localises to the cell inner membrane. Functionally, transports acetate. The chain is Cation/acetate symporter ActP (actP) from Escherichia coli O6:H1 (strain CFT073 / ATCC 700928 / UPEC).